We begin with the raw amino-acid sequence, 269 residues long: 4-hydroxy-tetrahydrodipicolinate reductase (269 aa).

NAD(+) is bound by residues 8 to 13 and glutamate 34; that span reads GAAGRM. Residue arginine 35 coordinates NADP(+). Residues 98–100 and 122–125 contribute to the NAD(+) site; these read GTT and APNY. Histidine 155 acts as the Proton donor/acceptor in catalysis. Histidine 156 contacts (S)-2,3,4,5-tetrahydrodipicolinate. The active-site Proton donor is lysine 159. 165–166 contacts (S)-2,3,4,5-tetrahydrodipicolinate; sequence GT.

The protein belongs to the DapB family.

The protein localises to the cytoplasm. The catalysed reaction is (S)-2,3,4,5-tetrahydrodipicolinate + NAD(+) + H2O = (2S,4S)-4-hydroxy-2,3,4,5-tetrahydrodipicolinate + NADH + H(+). It carries out the reaction (S)-2,3,4,5-tetrahydrodipicolinate + NADP(+) + H2O = (2S,4S)-4-hydroxy-2,3,4,5-tetrahydrodipicolinate + NADPH + H(+). Its pathway is amino-acid biosynthesis; L-lysine biosynthesis via DAP pathway; (S)-tetrahydrodipicolinate from L-aspartate: step 4/4. In terms of biological role, catalyzes the conversion of 4-hydroxy-tetrahydrodipicolinate (HTPA) to tetrahydrodipicolinate. This chain is 4-hydroxy-tetrahydrodipicolinate reductase, found in Vibrio vulnificus (strain YJ016).